Reading from the N-terminus, the 220-residue chain is Ras-related protein Rab-3A (220 aa).

GTP contacts are provided by Ser-31, Ser-32, Val-33, Gly-34, Lys-35, Thr-36, Ser-37, Thr-48, Pro-49, Ser-53, and Thr-54. Mg(2+) is bound at residue Thr-36. The Switch 1 signature appears at 49 to 58 (PAFVSTVGID). Mg(2+) contacts are provided by Thr-54 and Asp-77. Gly-80 contributes to the GTP binding site. A Switch 2 motif is present at residues 80–96 (GQERYRTITTAYYRGAM). Thr-86 is modified (phosphothreonine; by LRRK2). GTP is bound by residues Asn-135, Lys-136, Asp-138, Ala-166, and Lys-167. Phosphoserine is present on residues Ser-188 and Ser-190. The interval 194 to 220 (ADPAVTGAKQGPQLSDQQVPPHQDCAC) is disordered. Residues Cys-218 and Cys-220 are each lipidated (S-geranylgeranyl cysteine). Cys-220 is subject to Cysteine methyl ester.

Belongs to the small GTPase superfamily. Rab family. In terms of assembly, interacts with RIMS1 and RIMS2. Interacts with Rabphilin-3A/RPH3A and Rab effector Noc2/RPH3AL. Interacts with SYTL4. Interacts with RAB3IP. Interacts with SGSM1 and SGSM3. Interacts with SYT1. Interacts with MYH9; this interaction is essential for lysosome exocytosis and plasma membrane repair. Interacts with STXBP1; this interaction promotes RAB3A dissociation from the vesicle membrane. Interacts with SNCA. The GTP-bound form interacts with REP15. Interacts with GDI1, GDI2, CHM and CHML; phosphorylation at Thr-86 disrupts these interactions. Interacts with MADD (via uDENN domain); the GTP-bound form is preferred for interaction. Mg(2+) serves as cofactor. Phosphorylation of Thr-86 in the switch II region by LRRK2 prevents the association of RAB regulatory proteins, including CHM, CHML and RAB GDP dissociation inhibitors GDI1 and GDI2. Specifically expressed in brain.

It is found in the cytoplasm. It localises to the cytosol. Its subcellular location is the lysosome. The protein localises to the cytoplasmic vesicle. The protein resides in the secretory vesicle. It is found in the cell projection. It localises to the axon. Its subcellular location is the cell membrane. The protein localises to the presynapse. The protein resides in the postsynapse. The catalysed reaction is GTP + H2O = GDP + phosphate + H(+). Regulated by guanine nucleotide exchange factors (GEFs) including RAB3IL1 and MADD which promote the exchange of bound GDP for free GTP. Regulated by GTPase activating proteins (GAPs) including RAB3GAP1 and TBC1D10B which increase the GTP hydrolysis activity. Inhibited by GDP dissociation inhibitors (GDIs) which prevent Rab-GDP dissociation. The small GTPases Rab are key regulators of intracellular membrane trafficking, from the formation of transport vesicles to their fusion with membranes. Rabs cycle between an inactive GDP-bound form and an active GTP-bound form that is able to recruit to membranes different sets of downstream effectors directly responsible for vesicle formation, movement, tethering and fusion. RAB3A plays a central role in regulated exocytosis and secretion. Controls the recruitment, tethering and docking of secretory vesicles to the plasma membrane. Upon stimulation, switches to its active GTP-bound form, cycles to vesicles and recruits effectors such as RIMS1, RIMS2, Rabphilin-3A/RPH3A, RPH3AL or SYTL4 to help the docking of vesicules onto the plasma membrane. Upon GTP hydrolysis by GTPase-activating protein, dissociates from the vesicle membrane allowing the exocytosis to proceed. Stimulates insulin secretion through interaction with RIMS2 or RPH3AL effectors in pancreatic beta cells. Regulates calcium-dependent lysosome exocytosis and plasma membrane repair (PMR) via the interaction with 2 effectors, SYTL4 and myosin-9/MYH9. Acts as a positive regulator of acrosome content secretion in sperm cells by interacting with RIMS1. Also plays a role in the regulation of dopamine release by interacting with synaptotagmin I/SYT. In Homo sapiens (Human), this protein is Ras-related protein Rab-3A.